The following is a 176-amino-acid chain: MATAGKGSKGKGTGVRFTPEGTQGHPQEGTQGHVHFQEQLHDSAVMVTQDKDGHFLVKVGFLKILHKYEITFQLPPVPNLGKDVCPLPVPNPNLRIISVTSLPEGHNVRCEYTAHKEGVLKEELLLAGHSPTHIKVTVQARVMDRHHGTPMLLDGVRCVGAELEYDSEQSDWHGFD.

The tract at residues 1 to 30 (MATAGKGSKGKGTGVRFTPEGTQGHPQEGT) is disordered. Residues 20-30 (EGTQGHPQEGT) are compositionally biased toward polar residues.

It belongs to the ADISSP family.

May be involved in thermogenesis and glucose homeostasis. This Taeniopygia guttata (Zebra finch) protein is Adipose-secreted signaling protein.